The following is a 472-amino-acid chain: MSAVIALVGRPNVGKSTLFNRLTGSRDALVADHPGLTRDRQYGIVRHQGGHAVVVDTGGMGEELEGVGGCMHEQARAAIAGADAVVFLVDGQAGATVGDEEIAAELRRAQVPVFLAVNKTDGLDAGVAAADFHGLGLQPVHAIAATRGRGVGELLDAVFALLPPAEPDAVGSDGPGGIPVAMIGRPNVGKSTLVNRLLGEERVVVYDEPGTTRDSIAVPFERDGQHYTLIDTAGVRRRARVQETVEKFSVVKTLEAIERASVVMLVTDAQEGITEQDAHLAGHVLQAGRALVLVINKWDGLDPDQRRKVRRDLDLRFAFLGFARHHFVSALHGSGVGLLLESVERAHAAAHRDLATPELNDALQEALANHQPPLSRGRRIKLRYAHQGGHNPPVIVIHGNQVQRLPRAYMRYLENFFRDTFDLYGTPVRIECRASDNPFADKPNQLTERQRRRRQRVIHHAKKREKKRKRRR.

EngA-type G domains follow at residues 3–166 (AVIA…PPAE) and 178–351 (IPVA…AAAH). Residues 9 to 16 (GRPNVGKS), 56 to 60 (DTGGM), 118 to 121 (NKTD), 184 to 191 (GRPNVGKS), 231 to 235 (DTAGV), and 296 to 299 (NKWD) each bind GTP. Residues 352–436 (RDLATPELND…PVRIECRASD (85 aa)) form the KH-like domain. A disordered region spans residues 434 to 472 (ASDNPFADKPNQLTERQRRRRQRVIHHAKKREKKRKRRR). Residues 450–472 (QRRRRQRVIHHAKKREKKRKRRR) are compositionally biased toward basic residues.

This sequence belongs to the TRAFAC class TrmE-Era-EngA-EngB-Septin-like GTPase superfamily. EngA (Der) GTPase family. As to quaternary structure, associates with the 50S ribosomal subunit.

In terms of biological role, GTPase that plays an essential role in the late steps of ribosome biogenesis. The chain is GTPase Der from Halorhodospira halophila (strain DSM 244 / SL1) (Ectothiorhodospira halophila (strain DSM 244 / SL1)).